Consider the following 420-residue polypeptide: Probable ABC transporter-binding protein DR_1438 (420 aa).

The N-terminal stretch at 1–24 (MKKFAAVLGLTVAFAAASQAHAVT) is a signal peptide.

The protein belongs to the bacterial solute-binding protein 1 family.

Its function is as follows. Probably part of a binding-protein-dependent transport system. This Deinococcus radiodurans (strain ATCC 13939 / DSM 20539 / JCM 16871 / CCUG 27074 / LMG 4051 / NBRC 15346 / NCIMB 9279 / VKM B-1422 / R1) protein is Probable ABC transporter-binding protein DR_1438.